The primary structure comprises 356 residues: Protein ATP1B4 (356 aa).

Residues 1-109 (MRRQLRSRRA…SLARTGQSRS (109 aa)) lie on the Nuclear side of the membrane. Residues 32–77 (LADEEEEAEEEAQVMMVPGLEEEEEEEEGKEEEEEREEEEGQGQST) form a disordered region. 2 stretches are compositionally biased toward acidic residues: residues 33–43 (ADEEEEAEEEA) and 51–72 (LEEEEEEEEGKEEEEEREEEEG). A helical; Signal-anchor for type II membrane protein transmembrane segment spans residues 110–130 (LILVIYFFFYASLAAVITLFI). The Perinuclear space portion of the chain corresponds to 131–356 (YMLFLAISPY…RIIFTLNIET (226 aa)).

The protein belongs to the X(+)/potassium ATPases subunit beta family. Does not associate with known Na,K-ATPase alpha-subunits. Associates with a SMAD7-transcriptional complex. Interacts with SNW1 and TOR1AIP1. As to expression, expressed in perinatal myocytes (at protein level). Expressed during postnatal development in skeletal muscle and heart.

It localises to the nucleus inner membrane. May act as a transcriptional coregulator during muscle development through its interaction with SNW1. Has lost its ancestral function as a Na,K-ATPase beta-subunit. This is Protein ATP1B4 (Atp1b4) from Rattus norvegicus (Rat).